The primary structure comprises 294 residues: DEP domain-containing protein 4 (294 aa).

The DEP domain occupies Leu71–Gly162.

This chain is DEP domain-containing protein 4 (DEPDC4), found in Homo sapiens (Human).